A 219-amino-acid chain; its full sequence is Polysialic acid transport ATP-binding protein KpsT (219 aa).

An ABC transporter domain is found at 2-218 (IKIENLTKSY…TEAIADYKKD (217 aa)). Residue 38–45 (GQNGAGKS) participates in ATP binding.

Belongs to the ABC transporter superfamily.

It is found in the cell inner membrane. Functionally, putative ATP-binding protein, and an energy coupling component for the transport of polysialic acid across the cytoplasmic membrane. This Escherichia coli protein is Polysialic acid transport ATP-binding protein KpsT (kpsT).